The chain runs to 702 residues: Sodium/hydrogen exchanger 6 (702 aa).

12 helical membrane-spanning segments follow: residues 72–92 (SANL…IWLF), 104–124 (GLAM…IHVP), 177–197 (VTFD…FYAG), 212–232 (ILAY…SIMY), 253–273 (CLLF…AIFH), 279–299 (VELY…AIVL), 325–345 (IGIF…TGVV), 373–393 (TFLL…FCGI), 415–435 (FELL…LTLF), 437–457 (FQNH…IFLG), 480–500 (NFQH…ALAI), and 516–536 (LLIV…MLSC).

The protein belongs to the monovalent cation:proton antiporter 1 (CPA1) transporter (TC 2.A.36) family. Homodimer. Interacts with RACK1; regulates the distribution of SLC9A6 between endosomes and the plasma membrane. Ubiquitinated (in vitro). Post-translationally, glycosylated.

The protein resides in the endosome membrane. It localises to the recycling endosome membrane. Its subcellular location is the early endosome membrane. The protein localises to the late endosome membrane. It is found in the cell membrane. It carries out the reaction Na(+)(in) + H(+)(out) = Na(+)(out) + H(+)(in). The enzyme catalyses K(+)(in) + H(+)(out) = K(+)(out) + H(+)(in). Functionally, endosomal Na(+), K(+)/H(+) antiporter. Mediates the electroneutral exchange of endosomal luminal H(+) for a cytosolic Na(+) or K(+). By facilitating proton efflux, SLC9A6 counteracts the acidity generated by vacuolar (V)-ATPase, thereby limiting luminal acidification. Responsible for alkalizing and maintaining the endosomal pH, and consequently in, e.g., endosome maturation and trafficking of recycling endosomal cargo. Plays a critical role during neurodevelopment by regulating synaptic development and plasticity. Implicated in the maintenance of cell polarity in a manner that is dependent on its ability to modulate intravesicular pH. Regulates intracelular pH in some specialized cells, osteoclasts and stereocilia where this transporter localizes to the plasma membrane. The chain is Sodium/hydrogen exchanger 6 (Slc9a6) from Mus musculus (Mouse).